The primary structure comprises 207 residues: N-(5'-phosphoribosyl)anthranilate isomerase (207 aa).

Belongs to the TrpF family.

The enzyme catalyses N-(5-phospho-beta-D-ribosyl)anthranilate = 1-(2-carboxyphenylamino)-1-deoxy-D-ribulose 5-phosphate. It functions in the pathway amino-acid biosynthesis; L-tryptophan biosynthesis; L-tryptophan from chorismate: step 3/5. The sequence is that of N-(5'-phosphoribosyl)anthranilate isomerase from Legionella pneumophila subsp. pneumophila (strain Philadelphia 1 / ATCC 33152 / DSM 7513).